A 62-amino-acid chain; its full sequence is Sauvatide (62 aa).

The first 24 residues, 1-24 (MDILKKSLFLILFLGLVSISFCDG), serve as a signal peptide directing secretion. Residues 25–46 (EKRQDDDEANESEEKKEIHEVE) constitute a propeptide that is removed on maturation. Lysine 58 is subject to Lysine amide.

As to expression, expressed by the skin glands.

Its subcellular location is the secreted. Functionally, induces contraction of smooth muscle in isolated rat urinary bladder with an EC(50) value of 2.2nM. The sequence is that of Sauvatide from Phyllomedusa sauvagei (Sauvage's leaf frog).